Reading from the N-terminus, the 716-residue chain is FLYWCH-type zinc finger-containing protein 1 (716 aa).

The disordered stretch occupies residues 1–35; that stretch reads MPLPEPSEQEGESVKAGQEPSPKPGTDVIPAAPRK. S21 is subject to Phosphoserine. The segment at 116 to 174 adopts an FLYWCH-type 1 zinc-finger fold; it reads FLRTPFGGRLLVLESFLYKQEKAVGDKVYWKCRQHAELGCRGRAITRGLRATVMRGHCH. Residue K134 forms a Glycyl lysine isopeptide (Lys-Gly) (interchain with G-Cter in SUMO2) linkage. The tract at residues 191-231 is disordered; it reads PSLALPEGLGEPQGPEGPGGRVEEPLEGVGPWQCPEEPEPT. A compositionally biased stretch (low complexity) spans 195 to 204; it reads LPEGLGEPQG. Position 261 is a phosphoserine (S261). Residues 273 to 331 form an FLYWCH-type 2 zinc finger; it reads FLRTCYGGSFLVHESFLYKREKAVGDKVYWTCRDHALHGCRSRAITQGQRVTVMRGHCH. At S371 the chain carries Phosphoserine. Residues 377 to 421 form a disordered region; sequence GPGPLTLTRPRPRKRAKVEDQELPTQPEAPDEHQDMDADPGGPEF. K393 participates in a covalent cross-link: Glycyl lysine isopeptide (Lys-Gly) (interchain with G-Cter in SUMO2). The FLYWCH-type 3 zinc-finger motif lies at 421-479; it reads FLKTPLGGSFLVYESFLYRREKAAGEKVYWTCRDQARMGCRSRAITQGRRVTVMRGHCH. S503 carries the post-translational modification Phosphoserine. The FLYWCH-type 4 zinc finger occupies 509–567; that stretch reads FLKTPLGGSFLVYESFLYRREKAAGEKVYWTCRDQARMGCRSRAITQGRRVMVMRRHCH. At S591 the chain carries Phosphoserine. The FLYWCH-type 5 zinc-finger motif lies at 600–658; that stretch reads FLRTSLGGRFLVHESFLYRKEKAAGEKVYWMCRDQARLGCRSRAITQGHRIMVMRSHCH. K685 participates in a covalent cross-link: Glycyl lysine isopeptide (Lys-Gly) (interchain with G-Cter in SUMO2). S696 bears the Phosphoserine mark.

As to quaternary structure, interacts with CTNNB1 (when unphosphorylated), perhaps preventing interaction of CTNNB1 with TCF4, and thereby regulating transcription activation; phosphorylation of CTNNB1 may inhibit the interaction.

It is found in the nucleus. The protein localises to the chromosome. Its subcellular location is the centromere. Transcription cofactor. Negatively regulates transcription activation by catenin beta-1 CTNNB1, perhaps acting by competing with TCF4 for CTNNB1 binding. May play a role in DNA-damage response signaling. Binds specifically to DNA sequences at peri-centromeric chromatin loci. The polypeptide is FLYWCH-type zinc finger-containing protein 1 (FLYWCH1) (Homo sapiens (Human)).